A 309-amino-acid polypeptide reads, in one-letter code: MEKVLVFGHKNPDTDAICSAIAYAELKKELGMNAEPVRLGEISGETQFALDYFKVEGPRFVETVASEVDNVILVDHNERQQSANDIESVRVLEVIDHHRIANFETSDPIYYRCEPVGCTATILNKMYKENGVTIRKEVAGLMLSAIISDSLLFKSPTCTEQDVAAARELAEIAGVDADSYGLEMLKAGADLSGKTMEQLISLDAKEFQMGNAKVEIAQVNAVDTNDVLVHQAELEKVISAVVEEKGLDLFLFVVTDILTNDSVGLAIGKAANVVEKAYNVSLENNTATLKGVVSRKKQIVPVLTEAFQA.

Mn(2+)-binding residues include H9, D13, D15, D75, H97, and D149.

The protein belongs to the PPase class C family. The cofactor is Mn(2+).

The protein resides in the cytoplasm. The enzyme catalyses diphosphate + H2O = 2 phosphate + H(+). The chain is Probable manganese-dependent inorganic pyrophosphatase from Bacillus cereus (strain G9842).